The chain runs to 89 residues: Small ribosomal subunit protein uS15 (89 aa).

It belongs to the universal ribosomal protein uS15 family. In terms of assembly, part of the 30S ribosomal subunit. Forms a bridge to the 50S subunit in the 70S ribosome, contacting the 23S rRNA.

Its function is as follows. One of the primary rRNA binding proteins, it binds directly to 16S rRNA where it helps nucleate assembly of the platform of the 30S subunit by binding and bridging several RNA helices of the 16S rRNA. Forms an intersubunit bridge (bridge B4) with the 23S rRNA of the 50S subunit in the ribosome. In Acidithiobacillus ferrooxidans (strain ATCC 23270 / DSM 14882 / CIP 104768 / NCIMB 8455) (Ferrobacillus ferrooxidans (strain ATCC 23270)), this protein is Small ribosomal subunit protein uS15.